The sequence spans 398 residues: Phosphoglycerate kinase (398 aa).

Substrate is bound by residues 21–23, R36, 59–62, R119, and R157; these read DFN and HLGR. ATP contacts are provided by residues K208, G296, E327, and 354–357; that span reads GGDS.

It belongs to the phosphoglycerate kinase family. Monomer.

It localises to the cytoplasm. It carries out the reaction (2R)-3-phosphoglycerate + ATP = (2R)-3-phospho-glyceroyl phosphate + ADP. The protein operates within carbohydrate degradation; glycolysis; pyruvate from D-glyceraldehyde 3-phosphate: step 2/5. This is Phosphoglycerate kinase from Streptococcus equi subsp. equi (strain 4047).